We begin with the raw amino-acid sequence, 119 residues long: Large ribosomal subunit protein uL18 (119 aa).

Belongs to the universal ribosomal protein uL18 family. In terms of assembly, part of the 50S ribosomal subunit; part of the 5S rRNA/L5/L18/L25 subcomplex. Contacts the 5S and 23S rRNAs.

Its function is as follows. This is one of the proteins that bind and probably mediate the attachment of the 5S RNA into the large ribosomal subunit, where it forms part of the central protuberance. The protein is Large ribosomal subunit protein uL18 of Clostridium botulinum (strain Okra / Type B1).